Here is a 249-residue protein sequence, read N- to C-terminus: Type III pantothenate kinase (249 aa).

An ATP-binding site is contributed by 6 to 13 (DCGNSLIK). Residues tyrosine 93 and 100–103 (GLDR) each bind substrate. The active-site Proton acceptor is the aspartate 102. Residue aspartate 122 coordinates K(+). Position 125 (threonine 125) interacts with ATP. A substrate-binding site is contributed by threonine 181.

It belongs to the type III pantothenate kinase family. Homodimer. NH4(+) serves as cofactor. It depends on K(+) as a cofactor.

It is found in the cytoplasm. The enzyme catalyses (R)-pantothenate + ATP = (R)-4'-phosphopantothenate + ADP + H(+). Its pathway is cofactor biosynthesis; coenzyme A biosynthesis; CoA from (R)-pantothenate: step 1/5. Catalyzes the phosphorylation of pantothenate (Pan), the first step in CoA biosynthesis. In Pseudomonas paraeruginosa (strain DSM 24068 / PA7) (Pseudomonas aeruginosa (strain PA7)), this protein is Type III pantothenate kinase.